Here is a 204-residue protein sequence, read N- to C-terminus: Crossover junction endodeoxyribonuclease RuvC (204 aa).

Catalysis depends on residues aspartate 7, glutamate 68, and aspartate 141. Positions 7, 68, and 141 each coordinate Mg(2+).

It belongs to the RuvC family. As to quaternary structure, homodimer which binds Holliday junction (HJ) DNA. The HJ becomes 2-fold symmetrical on binding to RuvC with unstacked arms; it has a different conformation from HJ DNA in complex with RuvA. In the full resolvosome a probable DNA-RuvA(4)-RuvB(12)-RuvC(2) complex forms which resolves the HJ. Requires Mg(2+) as cofactor.

It is found in the cytoplasm. It carries out the reaction Endonucleolytic cleavage at a junction such as a reciprocal single-stranded crossover between two homologous DNA duplexes (Holliday junction).. Its function is as follows. The RuvA-RuvB-RuvC complex processes Holliday junction (HJ) DNA during genetic recombination and DNA repair. Endonuclease that resolves HJ intermediates. Cleaves cruciform DNA by making single-stranded nicks across the HJ at symmetrical positions within the homologous arms, yielding a 5'-phosphate and a 3'-hydroxyl group; requires a central core of homology in the junction. The consensus cleavage sequence is 5'-(A/T)TT(C/G)-3'. Cleavage occurs on the 3'-side of the TT dinucleotide at the point of strand exchange. HJ branch migration catalyzed by RuvA-RuvB allows RuvC to scan DNA until it finds its consensus sequence, where it cleaves and resolves the cruciform DNA. The sequence is that of Crossover junction endodeoxyribonuclease RuvC from Clavibacter sepedonicus (Clavibacter michiganensis subsp. sepedonicus).